The sequence spans 676 residues: Hypermethylated in cancer 1 protein (676 aa).

Positions 1-27 (APGARPAASRERGHKSREERCGERGAA) are disordered. A compositionally biased stretch (basic and acidic residues) spans 8-23 (ASRERGHKSREERCGE). One can recognise a BTB domain in the interval 63 to 126 (CDVIIVVQNA…IYTGRLGECE (64 aa)). Residues 241 to 245 (GLDLS) form a binding to CtBP region. Disordered stretches follow at residues 264-326 (PAEP…LPRG) and 342-405 (GPYL…DRYC). Basic and acidic residues-rich tracts occupy residues 266–278 (EPRE…RHDS) and 351–361 (EKELEREEKAE). Low complexity predominate over residues 384–398 (STSEETGSSEGPSPG). C2H2-type zinc fingers lie at residues 420–447 (YVCI…EEEL), 474–501 (YRCS…LTRP), 502–529 (YPCT…GLKP), 530–557 (FACD…GEKP), and 558–585 (YECQ…AGPD).

Belongs to the krueppel C2H2-type zinc-finger protein family. Hic subfamily. As to quaternary structure, interacts with CtBP. In terms of tissue distribution, isoform 1 is highly expressed in kidney and lung. Expression of isoform 2 is higher in the lens, retina and stomach, and extremely low in heart, muscle, kidney and lung. Isoform 3 is weakly expressed in heart, kidney and lens.

It is found in the nucleus. Functionally, binds specifically to the gamma F-1-binding motif of the gamma F-crystallin promoter. May have a regulatory role in sclerotome specification and/or differentiation. Isoform 2 functions as a transcriptional repressor in lens cells. The sequence is that of Hypermethylated in cancer 1 protein (HIC1) from Gallus gallus (Chicken).